Consider the following 76-residue polypeptide: Exodeoxyribonuclease 7 small subunit (76 aa).

This sequence belongs to the XseB family. In terms of assembly, heterooligomer composed of large and small subunits.

It is found in the cytoplasm. The catalysed reaction is Exonucleolytic cleavage in either 5'- to 3'- or 3'- to 5'-direction to yield nucleoside 5'-phosphates.. Functionally, bidirectionally degrades single-stranded DNA into large acid-insoluble oligonucleotides, which are then degraded further into small acid-soluble oligonucleotides. This chain is Exodeoxyribonuclease 7 small subunit, found in Enterococcus faecalis (strain ATCC 700802 / V583).